A 706-amino-acid chain; its full sequence is Phosphatase and actin regulator 4 (706 aa).

The stretch at 42 to 67 is one RPEL 1 repeat; it reads EVLERKISMRKPREELVKRGLLVEVP. Disordered regions lie at residues 65–123, 196–380, 385–404, and 459–579; these read EVPE…QPCA, VHPR…HIPV, VPML…QSAS, and LKVP…REEW. Positions 106–121 are enriched in polar residues; that stretch reads DSTGSRPKSGETTVQP. A compositionally biased stretch (basic and acidic residues) spans 200-211; it reads HLSEKNSEKYRP. A compositionally biased stretch (polar residues) spans 266–276; the sequence is DPSTRQQSSVP. The span at 290–299 shows a compositional bias: pro residues; the sequence is KQPPVPPPKP. 3 stretches are compositionally biased toward acidic residues: residues 463–476, 508–523, and 531–541; these read DDDD…DESL, QEEE…DTDS, and EDDEEEEEEET. A compositionally biased stretch (basic and acidic residues) spans 563-579; sequence GPHDSNPEFPQRSREEW. 2 RPEL repeats span residues 588-613 and 625-650; these read SQLN…QKNE and RRLT…RFNE.

This sequence belongs to the phosphatase and actin regulator family. Binds ppp1ca and actin.

Its subcellular location is the cytoplasm. The protein localises to the cell projection. It localises to the lamellipodium. Regulator of protein phosphatase 1 (PP1) required for neural tube and optic fissure closure, and enteric neural crest cell (ENCCs) migration during development. Acts as an activator of PP1. During neural tube closure, localizes to the ventral neural tube and activates PP1, leading to down-regulate cell proliferation within cranial neural tissue and the neural retina. Also acts as a regulator of migration of enteric neural crest cells (ENCCs) by activating PP1, leading to repression of the integrin signaling through the rho/rock pathway. The polypeptide is Phosphatase and actin regulator 4 (phactr4) (Xenopus tropicalis (Western clawed frog)).